The sequence spans 156 residues: Ribosomal RNA large subunit methyltransferase H (156 aa).

S-adenosyl-L-methionine-binding positions include Leu73, Gly104, and 123–128 (LSSLTL).

Belongs to the RNA methyltransferase RlmH family. Homodimer.

It is found in the cytoplasm. The catalysed reaction is pseudouridine(1915) in 23S rRNA + S-adenosyl-L-methionine = N(3)-methylpseudouridine(1915) in 23S rRNA + S-adenosyl-L-homocysteine + H(+). In terms of biological role, specifically methylates the pseudouridine at position 1915 (m3Psi1915) in 23S rRNA. The sequence is that of Ribosomal RNA large subunit methyltransferase H from Neisseria meningitidis serogroup C / serotype 2a (strain ATCC 700532 / DSM 15464 / FAM18).